A 490-amino-acid chain; its full sequence is Probable diaminopimelate decarboxylase, chloroplastic (490 aa).

Residues 1 to 44 (MAAANLLSRALLPALNPNPSSHSNRVSPSAVSLRCRHGLTASVR) constitute a chloroplast transit peptide. Residues 45–66 (ASLSTAAPSPPPRPAAAAADGR) are disordered. Lysine 130 carries the post-translational modification N6-(pyridoxal phosphate)lysine. Pyridoxal 5'-phosphate-binding positions include glycine 309 and 345–348 (EPGR). Arginine 348, arginine 384, and tyrosine 388 together coordinate substrate. Catalysis depends on cysteine 415, which acts as the Proton donor. 2 residues coordinate substrate: glutamate 416 and tyrosine 444. A pyridoxal 5'-phosphate-binding site is contributed by tyrosine 444.

It belongs to the Orn/Lys/Arg decarboxylase class-II family. LysA subfamily. Homodimer. It depends on pyridoxal 5'-phosphate as a cofactor.

Its subcellular location is the plastid. It localises to the chloroplast. The enzyme catalyses meso-2,6-diaminopimelate + H(+) = L-lysine + CO2. It participates in amino-acid biosynthesis; L-lysine biosynthesis via DAP pathway; L-lysine from DL-2,6-diaminopimelate: step 1/1. Specifically catalyzes the decarboxylation of meso-diaminopimelate (meso-DAP) to L-lysine. The sequence is that of Probable diaminopimelate decarboxylase, chloroplastic (LYSA) from Oryza sativa subsp. japonica (Rice).